We begin with the raw amino-acid sequence, 194 residues long: Putative 3-methyladenine DNA glycosylase (194 aa).

This sequence belongs to the DNA glycosylase MPG family.

In Synechococcus elongatus (strain ATCC 33912 / PCC 7942 / FACHB-805) (Anacystis nidulans R2), this protein is Putative 3-methyladenine DNA glycosylase.